The following is a 489-amino-acid chain: 3-octaprenyl-4-hydroxybenzoate carboxy-lyase (489 aa).

A Mn(2+)-binding site is contributed by asparagine 172. Prenylated FMN contacts are provided by residues 175–177, 189–191, and 194–195; these read IYR, RWL, and RG. Glutamate 238 contacts Mn(2+). The active-site Proton donor is aspartate 287.

This sequence belongs to the UbiD family. As to quaternary structure, homohexamer. The cofactor is prenylated FMN. Mn(2+) is required as a cofactor.

The protein resides in the cell membrane. It catalyses the reaction a 4-hydroxy-3-(all-trans-polyprenyl)benzoate + H(+) = a 2-(all-trans-polyprenyl)phenol + CO2. It participates in cofactor biosynthesis; ubiquinone biosynthesis. Catalyzes the decarboxylation of 3-octaprenyl-4-hydroxy benzoate to 2-octaprenylphenol, an intermediate step in ubiquinone biosynthesis. This Aeromonas salmonicida (strain A449) protein is 3-octaprenyl-4-hydroxybenzoate carboxy-lyase.